We begin with the raw amino-acid sequence, 279 residues long: Digeranylgeranylglyceryl phosphate synthase (279 aa).

Helical transmembrane passes span 16 to 36 (LIAG…LPPI), 40 to 60 (LLIF…NDYF), 77 to 99 (GALS…ILIA), 104 to 121 (FEAF…YLYA), 124 to 144 (LKPQ…ITPI), 146 to 166 (GAIA…AFLV), 192 to 212 (IVWG…ATII), 220 to 240 (AGIG…LWAA), and 259 to 279 (LKIA…TKGV).

Belongs to the UbiA prenyltransferase family. DGGGP synthase subfamily. It depends on Mg(2+) as a cofactor.

Its subcellular location is the cell membrane. The catalysed reaction is sn-3-O-(geranylgeranyl)glycerol 1-phosphate + (2E,6E,10E)-geranylgeranyl diphosphate = 2,3-bis-O-(geranylgeranyl)-sn-glycerol 1-phosphate + diphosphate. The protein operates within membrane lipid metabolism; glycerophospholipid metabolism. Functionally, prenyltransferase that catalyzes the transfer of the geranylgeranyl moiety of geranylgeranyl diphosphate (GGPP) to the C2 hydroxyl of (S)-3-O-geranylgeranylglyceryl phosphate (GGGP). This reaction is the second ether-bond-formation step in the biosynthesis of archaeal membrane lipids. The sequence is that of Digeranylgeranylglyceryl phosphate synthase from Thermococcus sibiricus (strain DSM 12597 / MM 739).